The sequence spans 274 residues: Diaminopimelate epimerase (274 aa).

Positions 11, 44, and 64 each coordinate substrate. C73 (proton donor) is an active-site residue. Substrate contacts are provided by residues 74 to 75, N157, N190, and 208 to 209; these read GN and ER. C217 serves as the catalytic Proton acceptor. 218–219 contacts substrate; that stretch reads GS.

The protein belongs to the diaminopimelate epimerase family. Homodimer.

The protein localises to the cytoplasm. It catalyses the reaction (2S,6S)-2,6-diaminopimelate = meso-2,6-diaminopimelate. It participates in amino-acid biosynthesis; L-lysine biosynthesis via DAP pathway; DL-2,6-diaminopimelate from LL-2,6-diaminopimelate: step 1/1. Functionally, catalyzes the stereoinversion of LL-2,6-diaminopimelate (L,L-DAP) to meso-diaminopimelate (meso-DAP), a precursor of L-lysine and an essential component of the bacterial peptidoglycan. This chain is Diaminopimelate epimerase, found in Haemophilus influenzae (strain PittGG).